We begin with the raw amino-acid sequence, 323 residues long: Phosphoribosylaminoimidazole-succinocarboxamide synthase (323 aa).

This sequence belongs to the SAICAR synthetase family.

It catalyses the reaction 5-amino-1-(5-phospho-D-ribosyl)imidazole-4-carboxylate + L-aspartate + ATP = (2S)-2-[5-amino-1-(5-phospho-beta-D-ribosyl)imidazole-4-carboxamido]succinate + ADP + phosphate + 2 H(+). It participates in purine metabolism; IMP biosynthesis via de novo pathway; 5-amino-1-(5-phospho-D-ribosyl)imidazole-4-carboxamide from 5-amino-1-(5-phospho-D-ribosyl)imidazole-4-carboxylate: step 1/2. The polypeptide is Phosphoribosylaminoimidazole-succinocarboxamide synthase (Azobacteroides pseudotrichonymphae genomovar. CFP2).